Consider the following 356-residue polypeptide: Tyrosine recombinase XerS (356 aa).

Positions 16 to 121 constitute a Core-binding (CB) domain; the sequence is LMPWYVLEYY…ALSSLYKYLT (106 aa). Residues 169–354 form the Tyr recombinase domain; it reads GFLTYIDQEH…VSDEQKNALD (186 aa). Active-site residues include Arg-210, Lys-234, His-306, Arg-309, and His-332. The active-site O-(3'-phospho-DNA)-tyrosine intermediate is Tyr-341.

The protein belongs to the 'phage' integrase family. XerS subfamily.

Its subcellular location is the cytoplasm. With respect to regulation, ftsK is required for recombination. Site-specific tyrosine recombinase, which acts by catalyzing the cutting and rejoining of the recombining DNA molecules. Essential to convert dimers of the bacterial chromosome into monomers to permit their segregation at cell division. The polypeptide is Tyrosine recombinase XerS (Streptococcus pneumoniae (strain 70585)).